The primary structure comprises 726 residues: Probable dipeptidyl-peptidase 5 (726 aa).

Positions 1 to 19 (MAAAKWLIASLAFASSGLA) are cleaved as a signal peptide. N-linked (GlcNAc...) asparagine glycans are attached at residues Asn-96 and Asn-252. The disordered stretch occupies residues 269–291 (AEPINKRNGPRTPQGIEGASSSP). An N-linked (GlcNAc...) asparagine glycan is attached at Asn-485. Ser-558 acts as the Charge relay system in catalysis. The N-linked (GlcNAc...) asparagine glycan is linked to Asn-605. Catalysis depends on charge relay system residues Asp-641 and His-673. The N-linked (GlcNAc...) asparagine glycan is linked to Asn-699.

The protein belongs to the peptidase S9C family.

The protein resides in the secreted. Its function is as follows. Extracellular dipeptidyl-peptidase which removes N-terminal dipeptides sequentially from polypeptides having unsubstituted N-termini. Contributes to pathogenicity. This is Probable dipeptidyl-peptidase 5 (DPP5) from Arthroderma benhamiae (strain ATCC MYA-4681 / CBS 112371) (Trichophyton mentagrophytes).